Reading from the N-terminus, the 57-residue chain is MSKIFLRKGETIDETLRRFKREVAKNGVLAEARRKEHYIKPSVQRKNLQKSMRGKRR.

The protein belongs to the bacterial ribosomal protein bS21 family.

In Phytoplasma australiense, this protein is Small ribosomal subunit protein bS21.